A 184-amino-acid polypeptide reads, in one-letter code: Oligoribonuclease (184 aa).

An Exonuclease domain is found at Leu7–Leu170. Tyr128 is an active-site residue.

The protein belongs to the oligoribonuclease family.

The protein resides in the cytoplasm. Its function is as follows. 3'-to-5' exoribonuclease specific for small oligoribonucleotides. This is Oligoribonuclease from Baumannia cicadellinicola subsp. Homalodisca coagulata.